The chain runs to 673 residues: MLEQARRRLAGLNAKLRHHDMLYHGLDAPEVTDHQYDLLVQEKKRLLDEFPDIRQYDDYADVVGTPKIDSRFPKVQHLEPMLSLENAFTVQDVEKFITRVRRFLELQPDDILELSCELKMDGMSFSALYHGGKLTRVATRGNGHFGEDITTNAMVLRGLPHQLDSAPEVLEVRGEIYMHHEDFEKLRGSCNFANPRNAAAGSIRQLNQKIVEERNLSYVAYSAVNSTFATQQEILKQLDEWGFHTNKQVLFTDKIEEAIAFYNSVYTTRSALGYDIDGVVYKVNSINFQKLLGATGKSPRWAIAHKFPSTEARTKLLDITVQVGRTGVVTPIAELEPINIGGVMVSRASLHNLNEIERKDVRIGDLVIVKRAGEVIPQVVDVDKTLRSSGTQKFVFPSHCPSCGSKLHREPGEVALRCVAELSCKAQALERVKHFVSRDGLNIMGLGAKQIEFFCNHGLIGSIADIFSLEEKLHGINLDTEHGWGEKSVANLIAAIRNSATVRLSNFIFALGIRFIGVGAAKLIAEHYRSYKNWHQAMLALTETHDTVQIRGLGEKSISSLKAFFSVQGNLEVLESLSAKLNILDEASPAQRGSSAISGKTVVFTGTLESMSRTEAKLQAESLGAKVANSVSANTWLLVAGSNPGSKHEKALSLNVRVIDEQTWVKMVEDARS.

NAD(+) is bound by residues Asp-33–Asp-37, Ser-83–Leu-84, and Glu-117. Residue Lys-119 is the N6-AMP-lysine intermediate of the active site. Residues Arg-140, Glu-175, Lys-282, and Lys-306 each contribute to the NAD(+) site. Cys-400, Cys-403, Cys-418, and Cys-424 together coordinate Zn(2+). One can recognise a BRCT domain in the interval Arg-592–Ser-673.

This sequence belongs to the NAD-dependent DNA ligase family. LigA subfamily. The cofactor is Mg(2+). Mn(2+) is required as a cofactor.

It catalyses the reaction NAD(+) + (deoxyribonucleotide)n-3'-hydroxyl + 5'-phospho-(deoxyribonucleotide)m = (deoxyribonucleotide)n+m + AMP + beta-nicotinamide D-nucleotide.. DNA ligase that catalyzes the formation of phosphodiester linkages between 5'-phosphoryl and 3'-hydroxyl groups in double-stranded DNA using NAD as a coenzyme and as the energy source for the reaction. It is essential for DNA replication and repair of damaged DNA. This chain is DNA ligase, found in Anaplasma marginale (strain Florida).